The following is a 486-amino-acid chain: Galactose-1-phosphate uridylyltransferase (486 aa).

The protein belongs to the galactose-1-phosphate uridylyltransferase type 2 family.

Its subcellular location is the cytoplasm. The enzyme catalyses alpha-D-galactose 1-phosphate + UDP-alpha-D-glucose = alpha-D-glucose 1-phosphate + UDP-alpha-D-galactose. It participates in carbohydrate metabolism; galactose metabolism. The chain is Galactose-1-phosphate uridylyltransferase from Lacticaseibacillus casei (strain BL23) (Lactobacillus casei).